We begin with the raw amino-acid sequence, 376 residues long: Erythronate-4-phosphate dehydrogenase (376 aa).

2 residues coordinate substrate: serine 45 and threonine 67. Position 147 (aspartate 147) interacts with NAD(+). Residue arginine 209 is part of the active site. NAD(+) is bound at residue aspartate 233. Glutamate 238 is a catalytic residue. Histidine 255 acts as the Proton donor in catalysis. Glycine 258 serves as a coordination point for NAD(+). Tyrosine 259 provides a ligand contact to substrate.

The protein belongs to the D-isomer specific 2-hydroxyacid dehydrogenase family. PdxB subfamily. As to quaternary structure, homodimer.

The protein resides in the cytoplasm. The enzyme catalyses 4-phospho-D-erythronate + NAD(+) = (R)-3-hydroxy-2-oxo-4-phosphooxybutanoate + NADH + H(+). The protein operates within cofactor biosynthesis; pyridoxine 5'-phosphate biosynthesis; pyridoxine 5'-phosphate from D-erythrose 4-phosphate: step 2/5. In terms of biological role, catalyzes the oxidation of erythronate-4-phosphate to 3-hydroxy-2-oxo-4-phosphonooxybutanoate. This Shewanella baltica (strain OS223) protein is Erythronate-4-phosphate dehydrogenase.